Reading from the N-terminus, the 219-residue chain is 7-cyano-7-deazaguanine synthase 2 (219 aa).

Position 8–18 (8–18) interacts with ATP; sequence YSGGMDSFTAL. The Zn(2+) site is built by C185, C193, C196, and C199.

The protein belongs to the QueC family. It depends on Zn(2+) as a cofactor.

It catalyses the reaction 7-carboxy-7-deazaguanine + NH4(+) + ATP = 7-cyano-7-deazaguanine + ADP + phosphate + H2O + H(+). It participates in purine metabolism; 7-cyano-7-deazaguanine biosynthesis. In terms of biological role, catalyzes the ATP-dependent conversion of 7-carboxy-7-deazaguanine (CDG) to 7-cyano-7-deazaguanine (preQ(0)). This Colwellia psychrerythraea (strain 34H / ATCC BAA-681) (Vibrio psychroerythus) protein is 7-cyano-7-deazaguanine synthase 2.